Here is a 364-residue protein sequence, read N- to C-terminus: Putative agmatine deiminase (364 aa).

The active-site Amidino-cysteine intermediate is the Cys355.

The protein belongs to the agmatine deiminase family.

The enzyme catalyses agmatine + H2O = N-carbamoylputrescine + NH4(+). The polypeptide is Putative agmatine deiminase (Mycoplasma mycoides subsp. mycoides SC (strain CCUG 32753 / NCTC 10114 / PG1)).